Consider the following 331-residue polypeptide: Neuropeptides B/W receptor type 1 (331 aa).

The Extracellular portion of the chain corresponds to 1-43 (MHNASYWGPERANTSCPAPAPTLGCPNASGPAPPLPPPLAVAV). N-linked (GlcNAc...) asparagine glycosylation is found at Asn3, Asn13, and Asn27. The chain crosses the membrane as a helical span at residues 44–66 (PVVYAVICAVGLAGNSAVLFVLL). Residues 67–75 (RAPRRKTVT) are Cytoplasmic-facing. A helical transmembrane segment spans residues 76 to 100 (NLFILNLAVADELFTLVPPVNIADF). The Extracellular segment spans residues 101-115 (LLRRWPFGELLCKLV). A disulfide bridge connects residues Cys112 and Cys191. Residues 116–135 (VAVDQYNTFSSLYFLTVMSA) form a helical membrane-spanning segment. Topologically, residues 136 to 160 (DRYLVVLATAESRRVAGRTYGAARA) are cytoplasmic. The chain crosses the membrane as a helical span at residues 161–180 (VSLAVWGVATLVVLPFAVFA). Over 181-205 (RLDEEQGRRQCVLVFPQPEALWWRA) the chain is Extracellular. A helical transmembrane segment spans residues 206–227 (SRLYTLVLGFAIPVSTICVLYT). Residues 228–251 (SLLCRLRAIRLDSHAKALDRAKKR) lie on the Cytoplasmic side of the membrane. The chain crosses the membrane as a helical span at residues 252–276 (VTVLVVAILAVCLLVWTPYHLSTVV). Topologically, residues 277 to 286 (ALTTDLPQTP) are extracellular. Residues 287–301 (LVIAVSYFITSLSYA) traverse the membrane as a helical segment. The Cytoplasmic segment spans residues 302-331 (NSCLNPFLYAFLDDSFRRSLRQLLACRTTS).

It belongs to the G-protein coupled receptor 1 family.

It localises to the cell membrane. Functionally, interacts specifically with a number of opioid ligands. Receptor for neuropeptides B and W, which may be involved in neuroendocrine system regulation, food intake and the organization of other signals. This chain is Neuropeptides B/W receptor type 1 (NPBWR1), found in Bos taurus (Bovine).